A 738-amino-acid polypeptide reads, in one-letter code: Multifunctional procollagen lysine hydroxylase and glycosyltransferase LH3 (738 aa).

The signal sequence occupies residues methionine 1–alanine 24. Residues serine 25 to proline 290 form a required for glycosyltransferase activity region. Residue valine 44 to threonine 46 participates in UDP binding. Asparagine 63 carries an N-linked (GlcNAc...) asparagine glycan. Mn(2+) contacts are provided by aspartate 112, aspartate 115, and histidine 253. Aspartate 112–tyrosine 114 provides a ligand contact to UDP. Position 256 to 259 (glycine 256 to lysine 259) interacts with UDP. 2 disulfides stabilise this stretch: cysteine 279–cysteine 282 and cysteine 379–cysteine 385. Residues proline 295–arginine 520 are accessory region. Asparagine 548 is a glycosylation site (N-linked (GlcNAc...) asparagine). Cysteine 563 and cysteine 698 are joined by a disulfide. 2-oxoglutarate is bound by residues arginine 599 and tyrosine 656. One can recognise a Fe2OG dioxygenase domain in the interval arginine 647–proline 738. Fe cation-binding residues include histidine 667 and aspartate 669. An important for dimerization region spans residues threonine 672 to leucine 715. Asparagine 676 is a 2-oxoglutarate binding site. Histidine 719 is a Fe cation binding site. Arginine 729 contributes to the 2-oxoglutarate binding site.

Homodimer. Fe(2+) is required as a cofactor. The cofactor is L-ascorbate. It depends on Mn(2+) as a cofactor.

The protein resides in the rough endoplasmic reticulum. It is found in the endoplasmic reticulum lumen. Its subcellular location is the endoplasmic reticulum membrane. It localises to the secreted. The protein localises to the extracellular space. The catalysed reaction is L-lysyl-[collagen] + 2-oxoglutarate + O2 = (5R)-5-hydroxy-L-lysyl-[collagen] + succinate + CO2. It catalyses the reaction (5R)-5-hydroxy-L-lysyl-[collagen] + UDP-alpha-D-galactose = (5R)-5-O-(beta-D-galactosyl)-5-hydroxy-L-lysyl-[collagen] + UDP + H(+). The enzyme catalyses (5R)-5-O-(beta-D-galactosyl)-5-hydroxy-L-lysyl-[collagen] + UDP-alpha-D-glucose = (5R)-5-O-[alpha-D-glucosyl-(1-&gt;2)-beta-D-galactosyl]-5-hydroxy-L-lysyl-[collagen] + UDP + H(+). Functionally, multifunctional enzyme that catalyzes a series of post-translational modifications on Lys residues in procollagen. Plays a redundant role in catalyzing the formation of hydroxylysine residues in -Xaa-Lys-Gly- sequences in collagens. Plays a redundant role in catalyzing the transfer of galactose onto hydroxylysine groups, giving rise to galactosyl 5-hydroxylysine. Has an essential role by catalyzing the subsequent transfer of glucose moieties, giving rise to 1,2-glucosylgalactosyl-5-hydroxylysine residues. Catalyzes hydroxylation and glycosylation of Lys residues in the MBL1 collagen-like domain, giving rise to hydroxylysine and 1,2-glucosylgalactosyl-5-hydroxylysine residues. Catalyzes hydroxylation and glycosylation of Lys residues in the ADIPOQ collagen-like domain, giving rise to hydroxylysine and 1,2-glucosylgalactosyl-5-hydroxylysine residues. Essential for normal biosynthesis and secretion of type IV collagens. Essential for normal formation of basement membranes. In Pongo abelii (Sumatran orangutan), this protein is Multifunctional procollagen lysine hydroxylase and glycosyltransferase LH3 (PLOD3).